The primary structure comprises 290 residues: Inositol-1-monophosphatase (290 aa).

Glu83, Asp104, Ile106, and Asp107 together coordinate Mg(2+). Position 83 (Glu83) interacts with substrate. Residues 106 to 109 (IDGT), Arg206, and Asp235 contribute to the substrate site. Residue Asp235 participates in Mg(2+) binding.

The protein belongs to the inositol monophosphatase superfamily. It depends on Mg(2+) as a cofactor.

The enzyme catalyses a myo-inositol phosphate + H2O = myo-inositol + phosphate. This chain is Inositol-1-monophosphatase (suhB), found in Mycobacterium bovis (strain ATCC BAA-935 / AF2122/97).